The sequence spans 415 residues: L-cysteine:1D-myo-inositol 2-amino-2-deoxy-alpha-D-glucopyranoside ligase 2 (415 aa).

Zn(2+) is bound at residue C44. L-cysteinyl-5'-AMP contacts are provided by residues 44-47 (CGIT), T59, and 82-84 (NIT). Residues 46-56 (ITPYDSTHLGH) carry the 'HIGH' region motif. Residues 188–193 (ERGGDP) carry the 'ERGGDP' region motif. Position 228 (W228) interacts with L-cysteinyl-5'-AMP. Residue C232 participates in Zn(2+) binding. 250-252 (GSD) contacts L-cysteinyl-5'-AMP. Residue H257 participates in Zn(2+) binding. L-cysteinyl-5'-AMP is bound at residue I284. A 'KMSKS' region motif is present at residues 290–294 (KMSKS).

The protein belongs to the class-I aminoacyl-tRNA synthetase family. MshC subfamily. Monomer. It depends on Zn(2+) as a cofactor.

It catalyses the reaction 1D-myo-inositol 2-amino-2-deoxy-alpha-D-glucopyranoside + L-cysteine + ATP = 1D-myo-inositol 2-(L-cysteinylamino)-2-deoxy-alpha-D-glucopyranoside + AMP + diphosphate + H(+). Catalyzes the ATP-dependent condensation of GlcN-Ins and L-cysteine to form L-Cys-GlcN-Ins. In Corynebacterium jeikeium (strain K411), this protein is L-cysteine:1D-myo-inositol 2-amino-2-deoxy-alpha-D-glucopyranoside ligase 2.